The chain runs to 124 residues: Fluoride-specific ion channel FluC (124 aa).

4 helical membrane passes run 1–21 (MIPLILAVSAGGVAGTLLRFA), 38–58 (TLAVNIVGCLLIGVLYGLFLV), 69–89 (GLIVGFLGGLTTFSSFSLDTV), and 97–117 (VALALGYAALSVFGGLLATWA). Gly76 and Thr79 together coordinate Na(+).

It belongs to the fluoride channel Fluc/FEX (TC 1.A.43) family.

Its subcellular location is the cell inner membrane. It carries out the reaction fluoride(in) = fluoride(out). Its activity is regulated as follows. Na(+) is not transported, but it plays an essential structural role and its presence is essential for fluoride channel function. Functionally, fluoride-specific ion channel. Important for reducing fluoride concentration in the cell, thus reducing its toxicity. This Pseudomonas fluorescens (strain ATCC BAA-477 / NRRL B-23932 / Pf-5) protein is Fluoride-specific ion channel FluC.